The following is a 361-amino-acid chain: Porphobilinogen deaminase (361 aa).

Residue Ser-2 is modified to N-acetylserine. At Ser-69 the chain carries Phosphoserine. The residue at position 74 (Lys-74) is an N6-acetyllysine. A Phosphoserine modification is found at Ser-147. At Cys-261 the chain carries S-(dipyrrolylmethanemethyl)cysteine.

The protein belongs to the HMBS family. In terms of assembly, monomer. The cofactor is dipyrromethane.

It localises to the cytoplasm. The protein localises to the cytosol. It catalyses the reaction 4 porphobilinogen + H2O = hydroxymethylbilane + 4 NH4(+). It participates in porphyrin-containing compound metabolism; protoporphyrin-IX biosynthesis; coproporphyrinogen-III from 5-aminolevulinate: step 2/4. Its function is as follows. As part of the heme biosynthetic pathway, catalyzes the sequential polymerization of four molecules of porphobilinogen to form hydroxymethylbilane, also known as preuroporphyrinogen. Catalysis begins with the assembly of the dipyrromethane cofactor by the apoenzyme from two molecules of porphobilinogen or from preuroporphyrinogen. The covalently linked cofactor acts as a primer, around which the tetrapyrrole product is assembled. In the last step of catalysis, the product, preuroporphyrinogen, is released, leaving the cofactor bound to the holodeaminase intact. This chain is Porphobilinogen deaminase (Hmbs), found in Rattus norvegicus (Rat).